A 67-amino-acid chain; its full sequence is uncharacterized protein (67 aa).

This is an uncharacterized protein from Escherichia coli (Bacteriophage T4).